A 147-amino-acid polypeptide reads, in one-letter code: Lectin-like protein BA14k (147 aa).

The signal sequence occupies residues 1–26; sequence MNSFRKTCAGALALIFGATSIVPTVA. The helical transmembrane segment at 80–100 threads the bilayer; that stretch reads GWWYPLAAFGAGAIIGGAISQ.

The protein belongs to the BA14k family.

Its subcellular location is the cell membrane. In terms of biological role, has immunoglobulin-binding and hemagglutination properties, and can bind to mannose. Essential for virulence. May be involved in LPS biosynthesis or polysaccharide transport. In Brucella abortus (strain S19), this protein is Lectin-like protein BA14k.